Reading from the N-terminus, the 938-residue chain is Isoleucine--tRNA ligase (938 aa).

The 'HIGH' region signature appears at 58–68 (PYANGSIHIGH). Lys183 carries the post-translational modification N6-acetyllysine. Glu561 is an L-isoleucyl-5'-AMP binding site. Positions 602–606 (KMSKS) match the 'KMSKS' region motif. An ATP-binding site is contributed by Lys605. 4 residues coordinate Zn(2+): Cys901, Cys904, Cys921, and Cys924.

The protein belongs to the class-I aminoacyl-tRNA synthetase family. IleS type 1 subfamily. As to quaternary structure, monomer. Zn(2+) is required as a cofactor.

Its subcellular location is the cytoplasm. It carries out the reaction tRNA(Ile) + L-isoleucine + ATP = L-isoleucyl-tRNA(Ile) + AMP + diphosphate. Its function is as follows. Catalyzes the attachment of isoleucine to tRNA(Ile). As IleRS can inadvertently accommodate and process structurally similar amino acids such as valine, to avoid such errors it has two additional distinct tRNA(Ile)-dependent editing activities. One activity is designated as 'pretransfer' editing and involves the hydrolysis of activated Val-AMP. The other activity is designated 'posttransfer' editing and involves deacylation of mischarged Val-tRNA(Ile). This Escherichia coli O6:K15:H31 (strain 536 / UPEC) protein is Isoleucine--tRNA ligase.